A 264-amino-acid chain; its full sequence is Complement C1q tumor necrosis factor-related protein 6 (264 aa).

The N-terminal stretch at 1–24 (MRVIMGIASLGFLWAVFLLPLVFG) is a signal peptide. Asn-77 is a glycosylation site (N-linked (GlcNAc...) asparagine). A disordered region spans residues 81 to 125 (LKGDKGDRGPTGTPGKPGKNGTRGDRGSQGVKGDKGQAGSPGSSC). Residues 83 to 124 (GDKGDRGPTGTPGKPGKNGTRGDRGSQGVKGDKGQAGSPGSS) enclose the Collagen-like domain. Positions 90-100 (PTGTPGKPGKN) are enriched in low complexity. Positions 125–264 (CQTHYSAFSV…SGHLIKAEDN (140 aa)) constitute a C1q domain.

It is found in the secreted. This is Complement C1q tumor necrosis factor-related protein 6 (C1qtnf6) from Mus musculus (Mouse).